The sequence spans 515 residues: Transcription termination factor Rho (515 aa).

Positions Asp146–Asp221 constitute a Rho RNA-BD domain. Residues Gly264–Ala269, Lys276–Thr281, and Arg307 each bind ATP.

It belongs to the Rho family. In terms of assembly, homohexamer. The homohexamer assembles into an open ring structure.

Functionally, facilitates transcription termination by a mechanism that involves Rho binding to the nascent RNA, activation of Rho's RNA-dependent ATPase activity, and release of the mRNA from the DNA template. The polypeptide is Transcription termination factor Rho (Borreliella burgdorferi (strain ATCC 35210 / DSM 4680 / CIP 102532 / B31) (Borrelia burgdorferi)).